We begin with the raw amino-acid sequence, 519 residues long: Glycerophosphoinositol permease 1 (519 aa).

The disordered stretch occupies residues 1–32 (MSDLVKSSEVIETTEVPPHNNNNNKRHFKYDS). A helical membrane pass occupies residues 39–59 (LAGGVKLKDALMILCAGFALI). N93 carries N-linked (GlcNAc...) asparagine glycosylation. Helical transmembrane passes span 94-114 (ASLV…DYIG), 117-137 (WSIV…AASH), and 141-161 (VNGM…GIGA). N175 carries an N-linked (GlcNAc...) asparagine glycan. A run of 8 helical transmembrane segments spans residues 186 to 206 (ILAT…IFLI), 216 to 236 (DAIW…VFYF), 273 to 293 (VAWF…AGII), 313 to 333 (LLLG…VDIL), 337 to 357 (YTMM…GCGY), 363 to 383 (ITGL…FGPG), 404 to 424 (GISA…FSPI), and 432 to 452 (WTFI…FIFI). Residues 487-500 (EEEDLEGSSEDSSD) are compositionally biased toward acidic residues. Residues 487–519 (EEEDLEGSSEDSSDGEIVKNNTKNDVEKVDALK) are disordered. N-linked (GlcNAc...) asparagine glycosylation is present at N506. Residues 508-519 (TKNDVEKVDALK) are compositionally biased toward basic and acidic residues.

The protein belongs to the major facilitator superfamily. Sugar transporter (TC 2.A.1.1) family.

The protein localises to the cell membrane. It carries out the reaction sn-glycero-3-phospho-1D-myo-inositol(out) = sn-glycero-3-phospho-1D-myo-inositol(in). Glycerophosphodiester transporter that mediates uptake of glycerophosphoinositol (GroPIns) as a source of inositol and phosphate. Does not possess detectable glycerophosphocholine (GroPCho) transport activity. Although no glycerophosphoinositol transport activity occurs in the absence of GIT1, C.albicans is still able to use glycerophosphoinositol as a phosphate source at pH 7.5, albeit slowly. Thus, a second, GIT1-independent, mechanism must exist for utilizing glycerophosphoinositol as a phosphate source at physiological pH. The expanded ability to utilize GroPIns and GroPCho results from the organism's pathogenic nature and its need to occupy a variety of environments within its host organism. This possibility is buttressed by the fact that GroPIns and GroPCho are present and abundant in human fluids. This chain is Glycerophosphoinositol permease 1, found in Candida albicans (strain SC5314 / ATCC MYA-2876) (Yeast).